The following is a 71-amino-acid chain: MNDLKLLRSKLSTETIEELYKNLNLLKKELFNLRFQQALGDLKNTSRFSLVKKSIARIKTELTKRANSEEY.

The protein belongs to the universal ribosomal protein uL29 family.

This Rickettsia africae (strain ESF-5) protein is Large ribosomal subunit protein uL29.